The following is a 295-amino-acid chain: Protoheme IX farnesyltransferase 2 (295 aa).

The next 9 membrane-spanning stretches (helical) occupy residues 9 to 29 (ITKP…FFLA), 36 to 56 (LAIF…GCVF), 85 to 105 (VALV…YYVA), 108 to 128 (LAAL…SLYL), 135 to 155 (GTLV…VAVS), 163 to 183 (LTLL…IAIF), 209 to 229 (ILLY…SGYA), 230 to 250 (GMSY…MAWT), and 263 to 283 (KLFV…SVDF).

Belongs to the UbiA prenyltransferase family. Protoheme IX farnesyltransferase subfamily.

The protein localises to the cell inner membrane. The enzyme catalyses heme b + (2E,6E)-farnesyl diphosphate + H2O = Fe(II)-heme o + diphosphate. The protein operates within porphyrin-containing compound metabolism; heme O biosynthesis; heme O from protoheme: step 1/1. Its function is as follows. Converts heme B (protoheme IX) to heme O by substitution of the vinyl group on carbon 2 of heme B porphyrin ring with a hydroxyethyl farnesyl side group. This is Protoheme IX farnesyltransferase 2 from Pseudomonas fluorescens (strain ATCC BAA-477 / NRRL B-23932 / Pf-5).